An 86-amino-acid chain; its full sequence is Toxin CSTX-20 (86 aa).

Expressed by the venom gland.

Its subcellular location is the secreted. This Cupiennius salei (American wandering spider) protein is Toxin CSTX-20.